The chain runs to 768 residues: Protein transport protein Sec23A (768 aa).

Position 2 is an N-acetylthreonine (threonine 2). Zn(2+)-binding residues include cysteine 61, cysteine 66, cysteine 85, and cysteine 88. Threonine 308 bears the Phosphothreonine mark. One copy of the Gelsolin-like repeat lies at 632–718; sequence PEPVLLDSSS…EHGGSQARFL (87 aa).

It belongs to the SEC23/SEC24 family. SEC23 subfamily. As to quaternary structure, COPII is composed of at least five proteins: the Sec23/24 complex, the Sec13/31 complex and Sar1. Interacts with SEC23IP. Interacts with HTR4. Interacts with SEC16A. Interacts with SLC6A4. Interacts (as part of the Sec23/24 complex) with SEC22B; recruits SEC22B into COPII-coated vesicles and allows the transport of this cargo from the endoplasmic reticulum to the Golgi. Interacts (via Gelsolin-like repeat) with MIA2 and MIA3; specifically involved in the transport of large cargos like the collagen COL7A1. Interacts with DDHD1. Interacts with TMEM39A. Interacts with SACM1L; this interaction is reduced in the absence of TMEM39A. Interacts with kinase FAM20C; transport of FAM20C from the endoplasmic reticulum to the Golgi is likely to be mediated by COPII vesicles.

It is found in the cytoplasmic vesicle. It localises to the COPII-coated vesicle membrane. Its subcellular location is the endoplasmic reticulum membrane. The protein localises to the cytoplasm. The protein resides in the cytosol. Functionally, component of the coat protein complex II (COPII) which promotes the formation of transport vesicles from the endoplasmic reticulum (ER). The coat has two main functions, the physical deformation of the endoplasmic reticulum membrane into vesicles and the selection of cargo molecules for their transport to the Golgi complex. Required for the translocation of insulin-induced glucose transporter SLC2A4/GLUT4 to the cell membrane. The polypeptide is Protein transport protein Sec23A (Bos taurus (Bovine)).